The sequence spans 274 residues: 2,3,4,5-tetrahydropyridine-2,6-dicarboxylate N-succinyltransferase (274 aa).

Substrate contacts are provided by Arg-104 and Asp-141.

This sequence belongs to the transferase hexapeptide repeat family. As to quaternary structure, homotrimer.

The protein localises to the cytoplasm. It catalyses the reaction (S)-2,3,4,5-tetrahydrodipicolinate + succinyl-CoA + H2O = (S)-2-succinylamino-6-oxoheptanedioate + CoA. The protein operates within amino-acid biosynthesis; L-lysine biosynthesis via DAP pathway; LL-2,6-diaminopimelate from (S)-tetrahydrodipicolinate (succinylase route): step 1/3. In Yersinia enterocolitica serotype O:8 / biotype 1B (strain NCTC 13174 / 8081), this protein is 2,3,4,5-tetrahydropyridine-2,6-dicarboxylate N-succinyltransferase.